Consider the following 694-residue polypeptide: Methionine--tRNA ligase (694 aa).

The 'HIGH' region signature appears at 12–22 (PYANGPLHLGH). Zn(2+) contacts are provided by Cys143, Cys146, Cys156, and Cys159. Residues 330-334 (KMSKS) carry the 'KMSKS' region motif. Lys333 lines the ATP pocket. A compositionally biased stretch (low complexity) spans 550–575 (LAAPAAPATTSKAAPAKPDTKPAAAA). Residues 550-580 (LAAPAAPATTSKAAPAKPDTKPAAAANPQSP) are disordered. Residues 591–694 (DFAKLDLRIG…SGAQPGMPVR (104 aa)) enclose the tRNA-binding domain.

It belongs to the class-I aminoacyl-tRNA synthetase family. MetG type 1 subfamily. Homodimer. Zn(2+) is required as a cofactor.

It localises to the cytoplasm. It carries out the reaction tRNA(Met) + L-methionine + ATP = L-methionyl-tRNA(Met) + AMP + diphosphate. Its function is as follows. Is required not only for elongation of protein synthesis but also for the initiation of all mRNA translation through initiator tRNA(fMet) aminoacylation. The polypeptide is Methionine--tRNA ligase (Xanthomonas oryzae pv. oryzae (strain MAFF 311018)).